The primary structure comprises 303 residues: 2-dehydropantoate 2-reductase (303 aa).

NADP(+) is bound by residues Gly7 to Gly12, Asn98, and Ala122. Asn98 lines the substrate pocket. The active-site Proton donor is Lys176. Positions 180, 184, 194, and 244 each coordinate substrate. Position 256 (Glu256) interacts with NADP(+).

This sequence belongs to the ketopantoate reductase family. Monomer.

It localises to the cytoplasm. The catalysed reaction is (R)-pantoate + NADP(+) = 2-dehydropantoate + NADPH + H(+). It functions in the pathway cofactor biosynthesis; (R)-pantothenate biosynthesis; (R)-pantoate from 3-methyl-2-oxobutanoate: step 2/2. Catalyzes the NADPH-dependent reduction of ketopantoate into pantoic acid. The protein is 2-dehydropantoate 2-reductase (panE) of Salmonella typhi.